Here is a 109-residue protein sequence, read N- to C-terminus: Small ribosomal subunit protein bS6 (109 aa).

It belongs to the bacterial ribosomal protein bS6 family.

Binds together with bS18 to 16S ribosomal RNA. This chain is Small ribosomal subunit protein bS6, found in Dehalococcoides mccartyi (strain CBDB1).